The sequence spans 227 residues: Cytochrome c oxidase subunit 2 (227 aa).

Topologically, residues 1-26 (MATWSNLSLQDGASPLMEQLSFFHDH) are mitochondrial intermembrane. A helical transmembrane segment spans residues 27–48 (TMIDLLLITMIVGYSLSYMLLT). The Mitochondrial matrix segment spans residues 49 to 62 (KYTNRNMLHGHLIE). The chain crosses the membrane as a helical span at residues 63 to 82 (TIWTALPAITLIFIALPSLR). Topologically, residues 83-227 (LLYLLDDSSD…LFIKWLSNMM (145 aa)) are mitochondrial intermembrane. His-161, Cys-196, Glu-198, Cys-200, His-204, and Met-207 together coordinate Cu cation. A Mg(2+)-binding site is contributed by Glu-198.

Belongs to the cytochrome c oxidase subunit 2 family. Component of the cytochrome c oxidase (complex IV, CIV), a multisubunit enzyme composed of a catalytic core of 3 subunits and several supernumerary subunits. The complex exists as a monomer or a dimer and forms supercomplexes (SCs) in the inner mitochondrial membrane with ubiquinol-cytochrome c oxidoreductase (cytochrome b-c1 complex, complex III, CIII). Cu cation serves as cofactor.

It is found in the mitochondrion inner membrane. The catalysed reaction is 4 Fe(II)-[cytochrome c] + O2 + 8 H(+)(in) = 4 Fe(III)-[cytochrome c] + 2 H2O + 4 H(+)(out). In terms of biological role, component of the cytochrome c oxidase, the last enzyme in the mitochondrial electron transport chain which drives oxidative phosphorylation. The respiratory chain contains 3 multisubunit complexes succinate dehydrogenase (complex II, CII), ubiquinol-cytochrome c oxidoreductase (cytochrome b-c1 complex, complex III, CIII) and cytochrome c oxidase (complex IV, CIV), that cooperate to transfer electrons derived from NADH and succinate to molecular oxygen, creating an electrochemical gradient over the inner membrane that drives transmembrane transport and the ATP synthase. Cytochrome c oxidase is the component of the respiratory chain that catalyzes the reduction of oxygen to water. Electrons originating from reduced cytochrome c in the intermembrane space (IMS) are transferred via the dinuclear copper A center (CU(A)) of subunit 2 and heme A of subunit 1 to the active site in subunit 1, a binuclear center (BNC) formed by heme A3 and copper B (CU(B)). The BNC reduces molecular oxygen to 2 water molecules using 4 electrons from cytochrome c in the IMS and 4 protons from the mitochondrial matrix. The chain is Cytochrome c oxidase subunit 2 (COII) from Locusta migratoria (Migratory locust).